The sequence spans 127 residues: UPF0389 protein GA21628 (127 aa).

A helical membrane pass occupies residues 69 to 88 (IRLANIMIALTVIGCGIMVY).

Belongs to the UPF0389 family.

It localises to the membrane. This chain is UPF0389 protein GA21628, found in Drosophila pseudoobscura pseudoobscura (Fruit fly).